Reading from the N-terminus, the 225-residue chain is Adenosylcobinamide-GDP ribazoletransferase (225 aa).

The next 5 membrane-spanning stretches (helical) occupy residues 34 to 54 (FVGIFIGSVISIPAVLGFWFL), 93 to 113 (NLGTGGAVFLCVYFLILFYSF), 116 to 136 (VSAFYIIFSQVLAKFSMLLLL), 165 to 185 (PLLLVVLKPLAVFPLLFAITI), and 204 to 224 (VVGASNCLVFAGSLLVCYFLA).

The protein belongs to the CobS family. Mg(2+) is required as a cofactor.

It is found in the cell membrane. The enzyme catalyses alpha-ribazole + adenosylcob(III)inamide-GDP = adenosylcob(III)alamin + GMP + H(+). It carries out the reaction alpha-ribazole 5'-phosphate + adenosylcob(III)inamide-GDP = adenosylcob(III)alamin 5'-phosphate + GMP + H(+). Its pathway is cofactor biosynthesis; adenosylcobalamin biosynthesis; adenosylcobalamin from cob(II)yrinate a,c-diamide: step 7/7. Functionally, joins adenosylcobinamide-GDP and alpha-ribazole to generate adenosylcobalamin (Ado-cobalamin). Also synthesizes adenosylcobalamin 5'-phosphate from adenosylcobinamide-GDP and alpha-ribazole 5'-phosphate. The chain is Adenosylcobinamide-GDP ribazoletransferase (cobS1) from Archaeoglobus fulgidus (strain ATCC 49558 / DSM 4304 / JCM 9628 / NBRC 100126 / VC-16).